A 339-amino-acid chain; its full sequence is tRNA (cytidine(56)-2'-O)-methyltransferase (339 aa).

Residues L79 and 105–109 (GSEKV) contribute to the S-adenosyl-L-methionine site. One can recognise an HD domain in the interval 188 to 295 (LIEHVKAVEG…VAQADNLFAG (108 aa)).

It belongs to the aTrm56 family. In terms of assembly, homodimer.

It localises to the cytoplasm. The catalysed reaction is cytidine(56) in tRNA + S-adenosyl-L-methionine = 2'-O-methylcytidine(56) in tRNA + S-adenosyl-L-homocysteine + H(+). Specifically catalyzes the AdoMet-dependent 2'-O-ribose methylation of cytidine at position 56 in tRNAs. The sequence is that of tRNA (cytidine(56)-2'-O)-methyltransferase from Thermoplasma acidophilum (strain ATCC 25905 / DSM 1728 / JCM 9062 / NBRC 15155 / AMRC-C165).